Reading from the N-terminus, the 265-residue chain is Transcription factor BHLH089 (265 aa).

The segment at 1 to 132 (MDPAPTLAAE…PPPPEPPKQD (132 aa)) is disordered. 2 stretches are compositionally biased toward gly residues: residues 17–29 (LGGG…GGRG) and 44–53 (SRGGGGGGGA). Residues 95–105 (SKSSGDNSSLR) show a composition bias toward polar residues. Residues 142–155 (QATDSHSLAERARR) form a basic motif; degenerate region. Positions 142 to 192 (QATDSHSLAERARREKISERMKILQDLVPGCNKVIGKASVLDEIINYIQAL) constitute a bHLH domain. The helix-loop-helix motif stretch occupies residues 156–192 (EKISERMKILQDLVPGCNKVIGKASVLDEIINYIQAL).

The protein belongs to the bHLH protein family. As to quaternary structure, interacts with RSS3.

It localises to the nucleus. Functionally, transcription factor that may regulate jasmonate-regulated genes. This chain is Transcription factor BHLH089, found in Oryza sativa subsp. japonica (Rice).